The sequence spans 133 residues: Ribosome-binding factor A (133 aa).

This sequence belongs to the RbfA family. Monomer. Binds 30S ribosomal subunits, but not 50S ribosomal subunits or 70S ribosomes.

The protein localises to the cytoplasm. In terms of biological role, one of several proteins that assist in the late maturation steps of the functional core of the 30S ribosomal subunit. Associates with free 30S ribosomal subunits (but not with 30S subunits that are part of 70S ribosomes or polysomes). Required for efficient processing of 16S rRNA. May interact with the 5'-terminal helix region of 16S rRNA. This Yersinia enterocolitica protein is Ribosome-binding factor A.